The primary structure comprises 219 residues: Probable nicotinate-nucleotide adenylyltransferase (219 aa).

The protein belongs to the NadD family.

The catalysed reaction is nicotinate beta-D-ribonucleotide + ATP + H(+) = deamido-NAD(+) + diphosphate. It functions in the pathway cofactor biosynthesis; NAD(+) biosynthesis; deamido-NAD(+) from nicotinate D-ribonucleotide: step 1/1. Catalyzes the reversible adenylation of nicotinate mononucleotide (NaMN) to nicotinic acid adenine dinucleotide (NaAD). The sequence is that of Probable nicotinate-nucleotide adenylyltransferase from Chromohalobacter salexigens (strain ATCC BAA-138 / DSM 3043 / CIP 106854 / NCIMB 13768 / 1H11).